The chain runs to 352 residues: N-acetyl-gamma-glutamyl-phosphate reductase (352 aa).

Cys149 is an active-site residue.

The protein belongs to the NAGSA dehydrogenase family. Type 1 subfamily.

The protein localises to the cytoplasm. It carries out the reaction N-acetyl-L-glutamate 5-semialdehyde + phosphate + NADP(+) = N-acetyl-L-glutamyl 5-phosphate + NADPH + H(+). It participates in amino-acid biosynthesis; L-arginine biosynthesis; N(2)-acetyl-L-ornithine from L-glutamate: step 3/4. Catalyzes the NADPH-dependent reduction of N-acetyl-5-glutamyl phosphate to yield N-acetyl-L-glutamate 5-semialdehyde. The sequence is that of N-acetyl-gamma-glutamyl-phosphate reductase from Polynucleobacter asymbioticus (strain DSM 18221 / CIP 109841 / QLW-P1DMWA-1) (Polynucleobacter necessarius subsp. asymbioticus).